The sequence spans 605 residues: Alpha-amylase (605 aa).

The signal sequence occupies residues 1–33 (MGVRRSLAALLAALLGCATSLVALTVAASPAHA). 2 residues coordinate Ca(2+): Asn-130 and Asp-189. The Nucleophile role is filled by Asp-219. His-223 is a Ca(2+) binding site. Catalysis depends on Glu-253, which acts as the Proton donor. The region spanning 500-605 (GDDCTTVTAR…CSQNFYDSWR (106 aa)) is the CBM20 domain.

Belongs to the glycosyl hydrolase 13 family. In terms of assembly, monomer. It depends on Ca(2+) as a cofactor.

It catalyses the reaction Endohydrolysis of (1-&gt;4)-alpha-D-glucosidic linkages in polysaccharides containing three or more (1-&gt;4)-alpha-linked D-glucose units.. The chain is Alpha-amylase (tam) from Thermomonospora curvata.